A 636-amino-acid chain; its full sequence is Chitin synthase VI (636 aa).

A run of 4 helical transmembrane segments spans residues 23–43 (LQWFAFWSFSILLTVPWLFCI), 374–394 (TIRTTALLFFVMVLALLTTTA), 399–419 (LPVGFMAVSLGLNWLLMLYFG), and 427–447 (IWFYPLMFVLNPLFNWYYMVY). The disordered stretch occupies residues 595–636 (QRLRLEQRPRTGPSLNARWQNGPQASETSQGRSQVDDVGIAF). Polar residues predominate over residues 607–627 (PSLNARWQNGPQASETSQGRS).

Belongs to the chitin synthase family. Class VI subfamily. Moderately expressed during appressorium formation.

Its subcellular location is the cell membrane. The catalysed reaction is [(1-&gt;4)-N-acetyl-beta-D-glucosaminyl](n) + UDP-N-acetyl-alpha-D-glucosamine = [(1-&gt;4)-N-acetyl-beta-D-glucosaminyl](n+1) + UDP + H(+). Functionally, polymerizes chitin, a structural polymer of the cell wall and septum, by transferring the sugar moiety of UDP-GlcNAc to the non-reducing end of the growing chitin polymer. Contributes to the production of conidia but is the only chitine synthase that does not contribute to the ability of fungal conidia to germinate. Involved in fungal stress tolerances. The protein is Chitin synthase VI of Metarhizium acridum (strain CQMa 102).